A 120-amino-acid polypeptide reads, in one-letter code: Histone H3-like centromeric protein cnp1 (120 aa).

A disordered region spans residues 1 to 26; the sequence is MAKKSLMAEPGDPIPRPRKKRYRPGT. An H3-like region spans residues 14–120; it reads IPRPRKKRYR…MQLARRIRGA (107 aa).

The protein belongs to the histone H3 family. Component of centromeric nucleosomes, where DNA is wrapped around a histone octamer core. The octamer contains two molecules each of H2A, H2B, cnp1/CENPA and H4 assembled in one cnp1-H4 heterotetramer and two H2A-H2B heterodimers. Interacts with the inner kinetochore. Component of centromeric nucleosomes. Interacts with mis6. Interacts with sim4. In terms of processing, ubiquitinated. Is degraded through ubiquitin-mediated proteolysis when not protected by its association to the kinetochore.

Its subcellular location is the nucleus. It is found in the chromosome. The protein resides in the centromere. Histone H3-like nucleosomal protein that is specifically found in centromeric nucleosomes. Replaces conventional H3 in the nucleosome core of centromeric chromatin that serves as an assembly site for the inner kinetochore. Required for recruitment and assembly of kinetochore proteins, mitotic progression and chromosome segregation. May serve as an epigenetic mark that propagates centromere identity through replication and cell division. This chain is Histone H3-like centromeric protein cnp1 (cnp1), found in Schizosaccharomyces pombe (strain 972 / ATCC 24843) (Fission yeast).